A 100-amino-acid chain; its full sequence is Large ribosomal subunit protein bL27 (100 aa).

Residues 1 to 9 constitute a propeptide that is removed on maturation; sequence MLKMNLQLF.

This sequence belongs to the bacterial ribosomal protein bL27 family. Post-translationally, the N-terminus is cleaved by ribosomal processing cysteine protease Prp.

This is Large ribosomal subunit protein bL27 from Clostridium perfringens (strain ATCC 13124 / DSM 756 / JCM 1290 / NCIMB 6125 / NCTC 8237 / Type A).